A 624-amino-acid chain; its full sequence is tRNA uridine 5-carboxymethylaminomethyl modification enzyme MnmG (624 aa).

FAD is bound by residues 13 to 18, valine 125, and serine 180; that span reads GGGHAG. Residue 273 to 287 coordinates NAD(+); sequence GPRYCPSIEDKIVRF. Glutamine 370 contributes to the FAD binding site.

It belongs to the MnmG family. As to quaternary structure, homodimer. Heterotetramer of two MnmE and two MnmG subunits. Requires FAD as cofactor.

It localises to the cytoplasm. Functionally, NAD-binding protein involved in the addition of a carboxymethylaminomethyl (cmnm) group at the wobble position (U34) of certain tRNAs, forming tRNA-cmnm(5)s(2)U34. The sequence is that of tRNA uridine 5-carboxymethylaminomethyl modification enzyme MnmG from Legionella pneumophila (strain Lens).